The following is a 381-amino-acid chain: DNA replication and repair protein RecF (381 aa).

An ATP-binding site is contributed by 30-37; the sequence is GENAQGKT.

The protein belongs to the RecF family.

The protein resides in the cytoplasm. The RecF protein is involved in DNA metabolism; it is required for DNA replication and normal SOS inducibility. RecF binds preferentially to single-stranded, linear DNA. It also seems to bind ATP. The protein is DNA replication and repair protein RecF of Lactobacillus delbrueckii subsp. bulgaricus (strain ATCC BAA-365 / Lb-18).